Reading from the N-terminus, the 219-residue chain is Putative germin-like protein 8-1 (219 aa).

Positions 1 to 23 (MASFISFLLLAALIGMASWQAIA) are cleaved as a signal peptide. An intrachain disulfide couples C33 to C48. N-linked (GlcNAc...) asparagine glycans are attached at residues N53 and N79. The 153-residue stretch at 63–215 (AMLDKPRDTA…AFQVDKKIID (153 aa)) folds into the Cupin type-1 domain. Mn(2+) contacts are provided by H112, H114, E119, and H160.

It belongs to the germin family. In terms of assembly, oligomer (believed to be a pentamer but probably hexamer).

The protein localises to the secreted. It is found in the extracellular space. It localises to the apoplast. Functionally, plays a role in broad-spectrum disease resistance. Probably has no oxalate oxidase activity even if the active site is conserved. In Oryza sativa subsp. japonica (Rice), this protein is Putative germin-like protein 8-1.